A 153-amino-acid polypeptide reads, in one-letter code: Nuclear cap-binding protein subunit 2 (153 aa).

Residues Y17, Y40, 109 to 113, 120 to 124, and 130 to 131 each bind mRNA; these read RTDWD, RQYGR, and QV. The region spanning 37–115 is the RRM domain; it reads CTLYVGNLSF…RIVRTDWDAG (79 aa).

Belongs to the RRM NCBP2 family. In terms of assembly, component of the nuclear cap-binding complex (CBC), a heterodimer composed of ncbp1/cbp80 and ncbp2/cbp20 that interacts with m7GpppG-capped RNA.

Its subcellular location is the nucleus. It is found in the cytoplasm. Functionally, component of the cap-binding complex (CBC), which binds co-transcriptionally to the 5' cap of pre-mRNAs and is involved in various processes such as pre-mRNA splicing, translation regulation, nonsense-mediated mRNA decay, RNA-mediated gene silencing (RNAi) by microRNAs (miRNAs) and mRNA export. The CBC complex is involved in mRNA export from the nucleus, leading to the recruitment of the mRNA export machinery to the 5' end of mRNA and to mRNA export in a 5' to 3' direction through the nuclear pore. The CBC complex is also involved in mediating U snRNA and intronless mRNAs export from the nucleus. The CBC complex is essential for a pioneer round of mRNA translation, before steady state translation when the CBC complex is replaced by cytoplasmic cap-binding protein eIF4E. The pioneer round of mRNA translation mediated by the CBC complex plays a central role in nonsense-mediated mRNA decay (NMD), NMD only taking place in mRNAs bound to the CBC complex, but not on eIF4E-bound mRNAs. The CBC complex enhances NMD in mRNAs containing at least one exon-junction complex (EJC), promoting the interaction between upf1 and upf2. The CBC complex is also involved in 'failsafe' NMD, which is independent of the EJC complex, while it does not participate in Staufen-mediated mRNA decay (SMD). During cell proliferation, the CBC complex is also involved in microRNAs (miRNAs) biogenesis via its interaction with srrt/ars2, thereby being required for miRNA-mediated RNA interference. The CBC complex also acts as a negative regulator of parn, thereby acting as an inhibitor of mRNA deadenylation. In the CBC complex, ncbp2/cbp20 recognizes and binds capped RNAs (m7GpppG-capped RNA) but requires ncbp1/cbp80 to stabilize the movement of its N-terminal loop and lock the CBC into a high affinity cap-binding state with the cap structure. The conventional cap-binding complex with NCBP2 binds both small nuclear RNA (snRNA) and messenger (mRNA) and is involved in their export from the nucleus. The chain is Nuclear cap-binding protein subunit 2 (ncbp2) from Xenopus laevis (African clawed frog).